Consider the following 484-residue polypeptide: Muscarinic acetylcholine receptor M4 (484 aa).

The Extracellular segment spans residues 1–32 (MENDTWENESSASNHSIDETIVEIPGKYQTME). Residues asparagine 3, asparagine 8, and asparagine 14 are each glycosylated (N-linked (GlcNAc...) asparagine). A helical membrane pass occupies residues 33–55 (MIFIATVTGSLSLVTVVGNILVM). At 56 to 69 (LSIKVNRQLQTVNN) the chain is on the cytoplasmic side. Residues 70–90 (YFLFSLACADLIIGVFSMNLY) form a helical membrane-spanning segment. Residues 91 to 107 (SLYIIKGYWPLGPIVCD) lie on the Extracellular side of the membrane. An intrachain disulfide couples cysteine 106 to cysteine 186. The chain crosses the membrane as a helical span at residues 108–129 (LWLALDYVVSNASVMNLLIISL). Over 130–149 (ERXFCVTKPLTYPARRTTKM) the chain is Cytoplasmic. A helical transmembrane segment spans residues 150 to 172 (AGLMIAAAWLLSFELWAPAILFW). At 173 to 194 (QFIVGQRTVPSGECYIQFLSNP) the chain is on the extracellular side. Residues 195 to 217 (AVTFGTAIAAFYLPVVIMTILYI) traverse the membrane as a helical segment. At 218–406 (HISLASRSRV…AAREKKVTRT (189 aa)) the chain is on the cytoplasmic side. Positions 255-316 (NIPKQDAGDK…EKQPLSEASS (62 aa)) are disordered. Basic and acidic residues predominate over residues 260–270 (DAGDKVVEKKN). Residues 407–427 (IFAILLAFIITWTPYNVMVLI) form a helical membrane-spanning segment. Residues 428–441 (NTFCQTCIPETIWY) are Extracellular-facing. Residues 442-461 (IGYWLCYVNSTINPACYALC) form a helical membrane-spanning segment. The Cytoplasmic segment spans residues 462–484 (NATFKKTFKHLLMCQYKSIGTAR).

The protein belongs to the G-protein coupled receptor 1 family. Muscarinic acetylcholine receptor subfamily. CHRM4 sub-subfamily.

The protein resides in the cell membrane. The protein localises to the postsynaptic cell membrane. In terms of biological role, the muscarinic acetylcholine receptor mediates various cellular responses, including inhibition of adenylate cyclase, breakdown of phosphoinositides and modulation of potassium channels through the action of G proteins. Primary transducing effect is inhibition of adenylate cyclase. This Xenopus laevis (African clawed frog) protein is Muscarinic acetylcholine receptor M4 (chrm4).